Consider the following 490-residue polypeptide: Adenylosuccinate synthetase, chloroplastic (490 aa).

The transit peptide at 1-45 (MSLSSLTLDSNPRFAVGGPYHRRYPPLHHPRSFVSCSAKRPAVSA) directs the protein to the chloroplast. At S46 the chain carries N-acetylserine. GTP contacts are provided by residues 77-83 (GDEGKGK) and 105-107 (GHT). Residue D78 is the Proton acceptor of the active site. Residues D78 and G105 each contribute to the Mg(2+) site. IMP is bound by residues 78–81 (DEGK), 103–106 (NAGH), T195, R209, Q289, T304, and R368. H106 (proton donor) is an active-site residue. 364-370 (TTTGRPR) is a substrate binding site. GTP contacts are provided by residues R370, 396-398 (KLD), and 479-481 (GIG).

This sequence belongs to the adenylosuccinate synthetase family. Homodimer. Mg(2+) is required as a cofactor.

It is found in the plastid. The protein resides in the chloroplast. It carries out the reaction IMP + L-aspartate + GTP = N(6)-(1,2-dicarboxyethyl)-AMP + GDP + phosphate + 2 H(+). Its pathway is purine metabolism; AMP biosynthesis via de novo pathway; AMP from IMP: step 1/2. Functionally, plays an important role in the de novo pathway and in the salvage pathway of purine nucleotide biosynthesis. Catalyzes the first committed step in the biosynthesis of AMP from IMP. The sequence is that of Adenylosuccinate synthetase, chloroplastic from Arabidopsis thaliana (Mouse-ear cress).